Reading from the N-terminus, the 446-residue chain is Exodeoxyribonuclease 7 large subunit (446 aa).

Belongs to the XseA family. As to quaternary structure, heterooligomer composed of large and small subunits.

It is found in the cytoplasm. The catalysed reaction is Exonucleolytic cleavage in either 5'- to 3'- or 3'- to 5'-direction to yield nucleoside 5'-phosphates.. Its function is as follows. Bidirectionally degrades single-stranded DNA into large acid-insoluble oligonucleotides, which are then degraded further into small acid-soluble oligonucleotides. The sequence is that of Exodeoxyribonuclease 7 large subunit from Streptococcus pneumoniae (strain Taiwan19F-14).